The sequence spans 215 residues: tRNA (guanine-N(7)-)-methyltransferase (215 aa).

S-adenosyl-L-methionine-binding residues include glutamate 44, glutamate 69, aspartate 96, and aspartate 118. Aspartate 118 is an active-site residue. Substrate-binding positions include lysine 122, aspartate 154, and 192 to 195 (TEYE).

The protein belongs to the class I-like SAM-binding methyltransferase superfamily. TrmB family.

The enzyme catalyses guanosine(46) in tRNA + S-adenosyl-L-methionine = N(7)-methylguanosine(46) in tRNA + S-adenosyl-L-homocysteine. Its pathway is tRNA modification; N(7)-methylguanine-tRNA biosynthesis. Its function is as follows. Catalyzes the formation of N(7)-methylguanine at position 46 (m7G46) in tRNA. The sequence is that of tRNA (guanine-N(7)-)-methyltransferase from Levilactobacillus brevis (strain ATCC 367 / BCRC 12310 / CIP 105137 / JCM 1170 / LMG 11437 / NCIMB 947 / NCTC 947) (Lactobacillus brevis).